The sequence spans 111 residues: Cell division protein FtsB (111 aa).

Over 1-3 the chain is Cytoplasmic; sequence MGK. The helical transmembrane segment at 4 to 21 threads the bilayer; sequence LTLLLLILLGWLQYSLWL. Topologically, residues 22–111 are periplasmic; the sequence is GKNGIHDYVR…TNTSSNNTQR (90 aa). A coiled-coil region spans residues 33–63; the sequence is KDDVVVQQGNNAKLKDRNEQLFAEIDDLNGG. The segment at 88–111 is disordered; the sequence is VPESNHRNANTPSSTNTSSNNTQR. Residues 97–111 show a composition bias toward low complexity; that stretch reads NTPSSTNTSSNNTQR.

It belongs to the FtsB family. Part of a complex composed of FtsB, FtsL and FtsQ.

Its subcellular location is the cell inner membrane. Functionally, essential cell division protein. May link together the upstream cell division proteins, which are predominantly cytoplasmic, with the downstream cell division proteins, which are predominantly periplasmic. This chain is Cell division protein FtsB, found in Pectobacterium atrosepticum (strain SCRI 1043 / ATCC BAA-672) (Erwinia carotovora subsp. atroseptica).